Consider the following 146-residue polypeptide: Cyanate hydratase (146 aa).

Catalysis depends on residues arginine 87, glutamate 90, and serine 113.

It belongs to the cyanase family.

It carries out the reaction cyanate + hydrogencarbonate + 3 H(+) = NH4(+) + 2 CO2. Catalyzes the reaction of cyanate with bicarbonate to produce ammonia and carbon dioxide. This chain is Cyanate hydratase, found in Marinomonas sp. (strain MWYL1).